A 96-amino-acid chain; its full sequence is UPF0235 protein YggU (96 aa).

It belongs to the UPF0235 family.

In Escherichia coli (strain K12 / MC4100 / BW2952), this protein is UPF0235 protein YggU.